We begin with the raw amino-acid sequence, 988 residues long: Voltage-gated delayed rectifier potassium channel KCNH5 (988 aa).

The Cytoplasmic portion of the chain corresponds to 1–217; that stretch reads MPGGKRGLVA…LHYCAFKTTW (217 aa). The PAS domain occupies 14 to 86; sequence TFLENIVRRS…TIEKVRQTFD (73 aa). A PAC domain is found at 91–143; the sequence is NCFEVLLYKKNRTPVWFYMQIAPIRNEHEKVVLFLCTFKDITLFKQPIEDDST. A helical membrane pass occupies residues 218 to 238; sequence DWVILILTFYTAIMVPYNVSF. At 239–243 the chain is on the extracellular side; it reads KTKQN. Residues 244–264 form a helical membrane-spanning segment; the sequence is NIAWLVLDSVVDVIFLVDIVL. Over 265–291 the chain is Cytoplasmic; it reads NFHTTFVGPGGEVISDPKLIRMNYLKT. A helical transmembrane segment spans residues 292–312; the sequence is WFVIDLLSCLPYDIINAFENV. Topologically, residues 313–319 are extracellular; sequence DEGISSL. Residues 320–340 form a helical; Voltage-sensor membrane-spanning segment; it reads FSSLKVVRLLRLGRVARKLDH. The Cytoplasmic portion of the chain corresponds to 341–346; it reads YLEYGA. Residues 347–367 traverse the membrane as a helical segment; that stretch reads AVLVLLVCVFGLVAHWLACIW. At 368-419 the chain is on the extracellular side; it reads YSIGDYEVIDEVTNTIQIDSWLYQLALSIGTPYRYNTSAGIWEGGPSKDSLY. N-linked (GlcNAc...) asparagine glycosylation occurs at N403. The pore-forming intramembrane region spans 420 to 440; that stretch reads VSSLYFTMTSLTTIGFGNIAP. The short motif at 432-437 is the Selectivity filter element; that stretch reads TIGFGN. At 441 to 446 the chain is on the extracellular side; it reads TTDVEK. The chain crosses the membrane as a helical span at residues 447 to 467; it reads MFSVAMMMVGSLLYATIFGNV. The Cytoplasmic segment spans residues 468–988; that stretch reads TTIFQQMYAN…PESDKDEINF (521 aa). 550 to 668 serves as a coordination point for a nucleoside 3',5'-cyclic phosphate; the sequence is AFRLASDGCL…SFSRNLTLTC (119 aa). The calmodulin-binding stretch occupies residues 704–715; it reads HPVRKLFQKFKQ. The interval 721–741 is disordered; that stretch reads IQGSAQSDPERSQLQVESRPL. A compositionally biased stretch (polar residues) spans 723–741; it reads GSAQSDPERSQLQVESRPL. Residue K785 forms a Glycyl lysine isopeptide (Lys-Gly) (interchain with G-Cter in ubiquitin) linkage. The tract at residues 838-893 is disordered; the sequence is GLLSEDPKGSDSENSVTKNPLRKTDSCDSGITKSDLRLDKAGEARSPLEHSPSQAD. Over residues 871–885 the composition is skewed to basic and acidic residues; the sequence is SDLRLDKAGEARSPL. S883 is subject to Phosphoserine. The segment at 909-948 is CAD (involved in subunit assembly); that stretch reads TLQEVKHELKEDIQLLSCRMTALEKQVAEILKLLSEKSVP.

It belongs to the potassium channel family. H (Eag) (TC 1.A.1.20) subfamily. Kv10.2/KCNH5 sub-subfamily. As to quaternary structure, homotetramer. The potassium channel is probably composed of a homo- or heterotetrameric complex of pore-forming alpha subunits that can associate with modulating beta subunits. Heteromultimer with KCNH1/EAG.

It is found in the membrane. The catalysed reaction is K(+)(in) = K(+)(out). Functionally, pore-forming (alpha) subunit of a voltage-gated delayed rectifier potassium channel that mediates outward-rectifying potassium currents which, on depolarization, reaches a steady-state level and do not inactivate. The kinetic is characterized by a slow activation time course and a small voltage dependence of the activation time constants, therefore, starts to open at more negative voltages. The activation kinetics depend on the prepulse potential and external divalent cation concentration. The time course of activation is biphasic with a fast and a slowly activating current component. With negative prepulses, the current activation is delayed and slowed down several fold, whereas more positive prepulses speed up activation, therefore the activation rate depends on holding potential. The protein is Voltage-gated delayed rectifier potassium channel KCNH5 of Mus musculus (Mouse).